The sequence spans 285 residues: Phosphate import ATP-binding protein PstB (285 aa).

The 242-residue stretch at L39–I280 folds into the ABC transporter domain. G71–S78 serves as a coordination point for ATP.

It belongs to the ABC transporter superfamily. Phosphate importer (TC 3.A.1.7) family. The complex is composed of two ATP-binding proteins (PstB), two transmembrane proteins (PstC and PstA) and a solute-binding protein (PstS).

The protein resides in the cell inner membrane. It carries out the reaction phosphate(out) + ATP + H2O = ADP + 2 phosphate(in) + H(+). In terms of biological role, part of the ABC transporter complex PstSACB involved in phosphate import. Responsible for energy coupling to the transport system. This Alkalilimnicola ehrlichii (strain ATCC BAA-1101 / DSM 17681 / MLHE-1) protein is Phosphate import ATP-binding protein PstB.